The sequence spans 154 residues: Transcriptional regulator MraZ (154 aa).

SpoVT-AbrB domains lie at 6–53 (NSEA…PENV) and 83–126 (VEVI…SKEI).

The protein belongs to the MraZ family. Forms oligomers.

It localises to the cytoplasm. The protein localises to the nucleoid. The polypeptide is Transcriptional regulator MraZ (Phocaeicola vulgatus (strain ATCC 8482 / DSM 1447 / JCM 5826 / CCUG 4940 / NBRC 14291 / NCTC 11154) (Bacteroides vulgatus)).